A 338-amino-acid chain; its full sequence is Malate dehydrogenase, mitochondrial (338 aa).

Residues 1 to 24 (MLSALARPAGAALRRSFSTSAQNN) constitute a mitochondrion transit peptide. NAD(+)-binding positions include 31 to 37 (GASGGIG) and aspartate 57. A glycan (O-linked (GalNAc...) serine) is linked at serine 33. N6-acetyllysine; alternate occurs at positions 78 and 91. An N6-succinyllysine; alternate mark is found at lysine 78 and lysine 91. Arginine 104 and arginine 110 together coordinate substrate. NAD(+)-binding positions include asparagine 117 and 140–142 (ISN). Asparagine 142 provides a ligand contact to substrate. Lysine 165 carries the post-translational modification N6-acetyllysine. The active-site Proton relay is aspartate 173. A substrate-binding site is contributed by arginine 176. Lysine 185 bears the N6-acetyllysine; alternate mark. N6-succinyllysine; alternate is present on lysine 185. The Proton acceptor role is filled by histidine 200. Lysine 203 is modified (N6-succinyllysine). An N6-acetyllysine; alternate mark is found at lysine 215 and lysine 239. Lysine 215 and lysine 239 each carry N6-succinyllysine; alternate. At lysine 239 the chain carries N6-malonyllysine; alternate. The residue at position 246 (serine 246) is a Phosphoserine. Methionine 251 is an NAD(+) binding site. Lysine 269 carries the N6-succinyllysine modification. 5 positions are modified to N6-acetyllysine; alternate: lysine 296, lysine 301, lysine 307, lysine 314, and lysine 324. Lysine 296, lysine 301, lysine 307, lysine 314, and lysine 324 each carry N6-succinyllysine; alternate. Lysine 307 is subject to N6-malonyllysine; alternate. Serine 326 is subject to Phosphoserine. Residues lysine 328, lysine 329, and lysine 335 each carry the N6-acetyllysine; alternate modification. N6-succinyllysine; alternate is present on lysine 328. Lysine 329 is modified (N6-malonyllysine; alternate). N6-succinyllysine; alternate is present on lysine 335.

The protein belongs to the LDH/MDH superfamily. MDH type 1 family. Homodimer. Post-translationally, acetylation is enhanced after treatment either with trichostin A (TSA) or with nicotinamide (NAM) with the appearance of tri- and tetraacetylations. Glucose also increases acetylation. In terms of tissue distribution, ubiquitously expressed. Highly expressed in skeletal muscle and heart. Also expressed in liver, ileum, colon, kidney and adipose tissue, and at very low levels in lung, pancreas, stomach and spleen.

It is found in the mitochondrion matrix. It catalyses the reaction (S)-malate + NAD(+) = oxaloacetate + NADH + H(+). Enzyme activity is enhanced by acetylation. The protein is Malate dehydrogenase, mitochondrial of Felis catus (Cat).